A 210-amino-acid chain; its full sequence is Fimbriae Z protein (210 aa).

The Response regulatory domain maps to 5 to 121 (SVIIMDEHPI…DIYNAVKMIL (117 aa)). The residue at position 56 (Asp56) is a 4-aspartylphosphate. An HTH luxR-type domain is found at 143-208 (GGHHDMPLSN…ELIDYAKSHE (66 aa)). A DNA-binding region (H-T-H motif) is located at residues 167-186 (NKEIAEQLLLSNKTISAHKA).

The protein resides in the cytoplasm. The chain is Fimbriae Z protein (fimZ) from Salmonella typhimurium (strain LT2 / SGSC1412 / ATCC 700720).